A 318-amino-acid polypeptide reads, in one-letter code: UDP-N-acetylenolpyruvoylglucosamine reductase (318 aa).

The FAD-binding PCMH-type domain maps to 38–204 (IGGICPVVVE…LGIEILLKEG (167 aa)). Residue arginine 182 is part of the active site. The interval 212 to 232 (SLKDKRDRRNSSQPENKKSAG) is disordered. Residues 213–229 (LKDKRDRRNSSQPENKK) show a composition bias toward basic and acidic residues. The active-site Proton donor is the serine 233. Glutamate 310 is a catalytic residue.

It belongs to the MurB family. FAD serves as cofactor.

Its subcellular location is the cytoplasm. It carries out the reaction UDP-N-acetyl-alpha-D-muramate + NADP(+) = UDP-N-acetyl-3-O-(1-carboxyvinyl)-alpha-D-glucosamine + NADPH + H(+). The protein operates within cell wall biogenesis; peptidoglycan biosynthesis. Functionally, cell wall formation. This is UDP-N-acetylenolpyruvoylglucosamine reductase from Leptospira borgpetersenii serovar Hardjo-bovis (strain L550).